The following is a 264-amino-acid chain: Small ribosomal subunit protein eS1 (264 aa).

The segment at 232–264 is disordered; the sequence is HGEGGGAGKPSGDEAGTKVERADGYEPPVQESV. Residues 242 to 255 are compositionally biased toward basic and acidic residues; it reads SGDEAGTKVERADG.

The protein belongs to the eukaryotic ribosomal protein eS1 family. Component of the small ribosomal subunit. Mature ribosomes consist of a small (40S) and a large (60S) subunit. The 40S subunit contains about 33 different proteins and 1 molecule of RNA (18S). The 60S subunit contains about 49 different proteins and 3 molecules of RNA (28S, 5.8S and 5S). Part of the small subunit (SSU) processome, composed of more than 70 proteins and the RNA chaperone small nucleolar RNA (snoRNA) U3.

Its subcellular location is the cytoplasm. It localises to the nucleus. It is found in the nucleolus. In terms of biological role, component of the small ribosomal subunit. The ribosome is a large ribonucleoprotein complex responsible for the synthesis of proteins in the cell. Part of the small subunit (SSU) processome, first precursor of the small eukaryotic ribosomal subunit. During the assembly of the SSU processome in the nucleolus, many ribosome biogenesis factors, an RNA chaperone and ribosomal proteins associate with the nascent pre-rRNA and work in concert to generate RNA folding, modifications, rearrangements and cleavage as well as targeted degradation of pre-ribosomal RNA by the RNA exosome. May play a role during erythropoiesis. In Taeniopygia guttata (Zebra finch), this protein is Small ribosomal subunit protein eS1.